The following is a 355-amino-acid chain: Type II methyltransferase M.MthZI (355 aa).

This sequence belongs to the N(4)/N(6)-methyltransferase family. N(4) subfamily.

It carries out the reaction a 2'-deoxycytidine in DNA + S-adenosyl-L-methionine = an N(4)-methyl-2'-deoxycytidine in DNA + S-adenosyl-L-homocysteine + H(+). Functionally, a beta subtype methylase that recognizes the double-stranded sequence 5'-CTAG-3', methylates C-1 on both strands, and protects the DNA from cleavage by the MthZI endonuclease. This is Type II methyltransferase M.MthZI from Methanothermobacter thermautotrophicus (Methanobacterium thermoformicicum).